Here is a 1437-residue protein sequence, read N- to C-terminus: Protein SUPPRESSOR OF npr1-1, CONSTITUTIVE 1 (1437 aa).

Met1 carries the N-acetylmethionine modification. The 164-residue stretch at Arg19–Thr182 folds into the TIR domain. Residue Arg28–Arg33 participates in NAD(+) binding. The active site involves Glu93. LRR repeat units follow at residues Met554–Pro576, Leu577–Ala598, Tyr600–Leu621, Gly622–Ile645, Leu647–Ala668, Lys670–Leu691, Glu692–Cys715, Leu781–Thr805, Leu807–Leu828, His829–Leu851, Ser852–Ile875, Trp877–Leu895, Arg897–Leu918, Ser919–Ser939, Glu940–Thr962, Leu964–Leu985, Ser1009–Ser1029, Thr1030–Leu1052, Arg1054–Leu1075, Ser1076–Ser1096, Thr1097–Arg1121, Thr1123–Leu1143, and Leu1161–Tyr1185.

This sequence belongs to the disease resistance TIR-NB-LRR family. As to quaternary structure, homodimer. Interacts (via TIR domain) with TPR1. Interacts with EDS1. Interacts with SRFR1. Interacts with HSP90-3. Binds to MORC1/CRT1. Interacts with TRAF1B. Post-translationally, met-1 is specifically acetylated by N-terminal acetyltransferase complex A (NatA). The NatA-mediated acetylation serves as a degradation signal. Met-1 is specifically acetylated by N-terminal acetyltransferase complex B (NatB). The NatB-mediated acetylation stabilizes SNC1. In terms of tissue distribution, expressed in guard cells and epidermal cells, but not detected in mesophyll cells.

The protein resides in the cytoplasm. The protein localises to the microsome. Its subcellular location is the nucleus. The enzyme catalyses NAD(+) + H2O = ADP-D-ribose + nicotinamide + H(+). Disease resistance protein of the TIR-NB-LRR-type. Part of the RPP5 locus that contains a cluster of several paralogous disease resistance (R) genes. Resistance proteins guard the plant against pathogens that contain an appropriate avirulence protein via an indirect interaction with this avirulence protein. That triggers a defense system including the hypersensitive response, which restricts the pathogen growth. Probably acts as a NAD(+) hydrolase (NADase): in response to activation, catalyzes cleavage of NAD(+) into ADP-D-ribose (ADPR) and nicotinamide; NAD(+) cleavage triggering a defense system that promotes cell death. Expression regulated by MOS1 at chromatin level. Nuclear localization of SNC1 is essential for its activity. ABA deficiency can rescue high-temperature inhibition of SNC1-mediated defense responses. The polypeptide is Protein SUPPRESSOR OF npr1-1, CONSTITUTIVE 1 (Arabidopsis thaliana (Mouse-ear cress)).